A 108-amino-acid chain; its full sequence is Large ribosomal subunit protein uL24 (108 aa).

It belongs to the universal ribosomal protein uL24 family. Part of the 50S ribosomal subunit.

In terms of biological role, one of two assembly initiator proteins, it binds directly to the 5'-end of the 23S rRNA, where it nucleates assembly of the 50S subunit. One of the proteins that surrounds the polypeptide exit tunnel on the outside of the subunit. In Geobacter sulfurreducens (strain ATCC 51573 / DSM 12127 / PCA), this protein is Large ribosomal subunit protein uL24.